The following is an 849-amino-acid chain: Rho guanine nucleotide exchange factor 15 (849 aa).

Disordered stretches follow at residues 1-146, 159-202, and 277-308; these read MSAQ…ASAP, GAEG…NGTP, and LPPLKPPKPTKVRQDISTSEELPQPDLKLPSE. Basic residues predominate over residues 18–31; it reads RIIRPRPPSRHRAP. Over residues 48 to 59 the composition is skewed to polar residues; sequence QISNDASASVCT. Low complexity predominate over residues 65 to 110; the sequence is PPTASLKPPALLPPSVSRTSLDSQTSPDSPSSTPSPSPVSRRSISP. Ser107 and Ser109 each carry phosphoserine. Residues 111 to 123 show a composition bias toward pro residues; sequence EPAPCSPVPPPKP. A compositionally biased stretch (polar residues) spans 164 to 180; the sequence is AQSSDSLERCSQGSTEV. At Tyr361 the chain carries Phosphotyrosine; by EPHB2. Positions 425-609 constitute a DH domain; the sequence is RMQESLFEVV…SKIIERCSAE (185 aa). Polar residues-rich tracts occupy residues 771-786 and 840-849; these read CSEPSTPSKTEGQSLE and SSGTPDTPQP. Disordered stretches follow at residues 771–803 and 819–849; these read CSEPSTPSKTEGQSLESKAPRKHLHKNPEGWLK and GEHERRKHLRQHQKLLEAVGPSSGTPDTPQP.

In terms of assembly, interacts with EPHA4. Interacts with EPHB2. In terms of processing, phosphorylated on tyrosine residues upon EFNA1 stimulation. EPHB2-dependent phosphorylation at Tyr-361 triggers UBE3A-mediated ubiquitination. Ubiquitinated; UBE3A-mediated ubiquitination and degradation by the proteasome promotes EFNB1-dependent synapse formation. At P12, expressed is detected in the CA1 region and the dentate gyrus of the hippocampus.

The protein resides in the cell projection. The protein localises to the dendrite. Its function is as follows. Specific GEF for RhoA activation. Does not activate RAC1 or CDC42. Regulates vascular smooth muscle contractility. Negatively regulates excitatory synapse development by suppressing the synapse-promoting activity of EPHB2. The sequence is that of Rho guanine nucleotide exchange factor 15 (Arhgef15) from Mus musculus (Mouse).